The following is a 72-amino-acid chain: Heat-stable enterotoxin A2 (72 aa).

Positions 1 to 19 are cleaved as a signal peptide; that stretch reads MKKSILFIFLSVLSFSPFA. Residues 20-53 constitute a propeptide that is removed on maturation; that stretch reads QDAKPAGSSKEKITLESKKCNIVKKNNESSPESM. Intrachain disulfides connect cysteine 59–cysteine 64, cysteine 60–cysteine 68, and cysteine 63–cysteine 71.

It belongs to the heat-stable enterotoxin family.

It localises to the secreted. Functionally, toxin which activates the particulate form of guanylate cyclase and increases cyclic GMP levels within the host intestinal epithelial cells. The sequence is that of Heat-stable enterotoxin A2 (sta2) from Escherichia coli.